Here is a 307-residue protein sequence, read N- to C-terminus: UDP-3-O-acyl-N-acetylglucosamine deacetylase (307 aa).

Residues His78, His235, and Asp239 each contribute to the Zn(2+) site. His262 acts as the Proton donor in catalysis.

This sequence belongs to the LpxC family. The cofactor is Zn(2+).

It carries out the reaction a UDP-3-O-[(3R)-3-hydroxyacyl]-N-acetyl-alpha-D-glucosamine + H2O = a UDP-3-O-[(3R)-3-hydroxyacyl]-alpha-D-glucosamine + acetate. It participates in glycolipid biosynthesis; lipid IV(A) biosynthesis; lipid IV(A) from (3R)-3-hydroxytetradecanoyl-[acyl-carrier-protein] and UDP-N-acetyl-alpha-D-glucosamine: step 2/6. Catalyzes the hydrolysis of UDP-3-O-myristoyl-N-acetylglucosamine to form UDP-3-O-myristoylglucosamine and acetate, the committed step in lipid A biosynthesis. In Geotalea uraniireducens (strain Rf4) (Geobacter uraniireducens), this protein is UDP-3-O-acyl-N-acetylglucosamine deacetylase.